The primary structure comprises 45 residues: GHVPCGKDGRKCGYHADCCNCCLSGICKPSTSWTGCSTSTVQLTR.

Intrachain disulfides connect Cys5–Cys19, Cys12–Cys22, Cys18–Cys27, and Cys21–Cys36. At Leu43 the chain carries D-leucine. Position 45 (Arg45) is a propeptide, removed by a carboxypeptidase.

It belongs to the conotoxin I1 superfamily. As to expression, expressed by the venom duct.

It localises to the secreted. In terms of biological role, iota-conotoxins bind to voltage-gated sodium channels (Nav) and act as agonists by shifting the voltage-dependence of activation to more hyperpolarized levels. Produces general excitatory symptoms. The polypeptide is Iota-conotoxin-like R11.10 (Conus radiatus (Rayed cone)).